The following is a 1154-amino-acid chain: uncharacterized protein (1154 aa).

The signal sequence occupies residues 1–18; that stretch reads MKRNIFIKLLISLLLLSS. Residue C19 is the site of N-palmitoyl cysteine attachment. C19 carries S-diacylglycerol cysteine lipidation. 4 consecutive transmembrane segments (helical) span residues 288 to 308, 394 to 414, 423 to 443, and 458 to 478; these read ISVS…FLIG, LGFI…FLIF, ALIT…FMLF, and ISYA…SMII.

It belongs to the TrbL/VirB6 family.

It is found in the cell membrane. This is an uncharacterized protein from Rickettsia typhi (strain ATCC VR-144 / Wilmington).